The chain runs to 517 residues: Maturase K (517 aa).

Belongs to the intron maturase 2 family. MatK subfamily.

The protein resides in the plastid. It is found in the chloroplast. Functionally, usually encoded in the trnK tRNA gene intron. Probably assists in splicing its own and other chloroplast group II introns. The sequence is that of Maturase K from Veronica arvensis (Wall speedwell).